A 495-amino-acid chain; its full sequence is Transcription termination/antitermination protein NusA (495 aa).

Residues 135 to 200 form the S1 motif domain; it reads GQIITGIVKK…RGAQLFLSRS (66 aa). One can recognise a KH domain in the interval 302–370; that stretch reads HHTMDIAVDS…KNLNVSEKVI (69 aa). A run of 2 repeats spans residues 364–414 and 439–489. Residues 364-489 are 2 X 51 AA approximate repeats; it reads NVSEKVIKTL…LLIMAARNIC (126 aa).

This sequence belongs to the NusA family. As to quaternary structure, monomer. Binds directly to the core enzyme of the DNA-dependent RNA polymerase and to nascent RNA.

It localises to the cytoplasm. Participates in both transcription termination and antitermination. The chain is Transcription termination/antitermination protein NusA from Buchnera aphidicola subsp. Schizaphis graminum (strain Sg).